Reading from the N-terminus, the 415-residue chain is Serine--tRNA ligase (415 aa).

230-232 (TAE) contributes to the L-serine binding site. Residue 261 to 263 (RKE) participates in ATP binding. E284 contacts L-serine. Position 348–351 (348–351 (EISS)) interacts with ATP. S382 is an L-serine binding site.

The protein belongs to the class-II aminoacyl-tRNA synthetase family. Type-1 seryl-tRNA synthetase subfamily. As to quaternary structure, homodimer. The tRNA molecule binds across the dimer.

It localises to the cytoplasm. The catalysed reaction is tRNA(Ser) + L-serine + ATP = L-seryl-tRNA(Ser) + AMP + diphosphate + H(+). It carries out the reaction tRNA(Sec) + L-serine + ATP = L-seryl-tRNA(Sec) + AMP + diphosphate + H(+). It participates in aminoacyl-tRNA biosynthesis; selenocysteinyl-tRNA(Sec) biosynthesis; L-seryl-tRNA(Sec) from L-serine and tRNA(Sec): step 1/1. In terms of biological role, catalyzes the attachment of serine to tRNA(Ser). Is also able to aminoacylate tRNA(Sec) with serine, to form the misacylated tRNA L-seryl-tRNA(Sec), which will be further converted into selenocysteinyl-tRNA(Sec). In Sulfurimonas denitrificans (strain ATCC 33889 / DSM 1251) (Thiomicrospira denitrificans (strain ATCC 33889 / DSM 1251)), this protein is Serine--tRNA ligase.